A 193-amino-acid polypeptide reads, in one-letter code: Intracellular heme transport protein HutX (193 aa).

Position 116 (Tyr-116) interacts with heme.

Homodimer. Interacts with HutZ.

The protein resides in the cytoplasm. Binds heme. Heme is transferred to the heme-degrading enzyme HutZ via a specific protein-protein interaction. The protein is Intracellular heme transport protein HutX of Vibrio cholerae serotype O1 (strain ATCC 39315 / El Tor Inaba N16961).